A 231-amino-acid polypeptide reads, in one-letter code: 5'-methylthioadenosine/S-adenosylhomocysteine nucleosidase (231 aa).

The active-site Proton acceptor is the glutamate 12. Substrate is bound by residues glycine 78, valine 153, and 174-175; that span reads ME. Aspartate 198 acts as the Proton donor in catalysis.

Belongs to the PNP/UDP phosphorylase family. MtnN subfamily.

It carries out the reaction S-adenosyl-L-homocysteine + H2O = S-(5-deoxy-D-ribos-5-yl)-L-homocysteine + adenine. The catalysed reaction is S-methyl-5'-thioadenosine + H2O = 5-(methylsulfanyl)-D-ribose + adenine. The enzyme catalyses 5'-deoxyadenosine + H2O = 5-deoxy-D-ribose + adenine. It participates in amino-acid biosynthesis; L-methionine biosynthesis via salvage pathway; S-methyl-5-thio-alpha-D-ribose 1-phosphate from S-methyl-5'-thioadenosine (hydrolase route): step 1/2. In terms of biological role, catalyzes the irreversible cleavage of the glycosidic bond in both 5'-methylthioadenosine (MTA) and S-adenosylhomocysteine (SAH/AdoHcy) to adenine and the corresponding thioribose, 5'-methylthioribose and S-ribosylhomocysteine, respectively. Also cleaves 5'-deoxyadenosine, a toxic by-product of radical S-adenosylmethionine (SAM) enzymes, into 5-deoxyribose and adenine. In Vibrio cholerae serotype O1 (strain ATCC 39315 / El Tor Inaba N16961), this protein is 5'-methylthioadenosine/S-adenosylhomocysteine nucleosidase.